We begin with the raw amino-acid sequence, 163 residues long: NF-kappa-B inhibitor-interacting Ras-like protein 2 (163 aa).

The small GTPase-like stretch occupies residues 1 to 163; the sequence is MGKSCKVVIC…SANWNLHPDH (163 aa). 11–18 is a GTP binding site; it reads GQHGVGKT. The short motif at 35–43 is the Effector region element; the sequence is MIETQEDIY. GTP-binding positions include 61–65 and 120–123; these read DTRGL and NKSD.

This sequence belongs to the small GTPase superfamily. Ras family. KappaB-Ras subfamily.

The protein resides in the cytoplasm. In terms of biological role, atypical Ras-like protein that acts as a potent regulator of NF-kappa-B activity by preventing the degradation of NF-kappa-B inhibitor beta (NFKBIB) by most signals, explaining why NFKBIB is more resistant to degradation. This Xenopus laevis (African clawed frog) protein is NF-kappa-B inhibitor-interacting Ras-like protein 2 (nkiras2).